A 235-amino-acid chain; its full sequence is Small ribosomal subunit protein uS2 (235 aa).

This sequence belongs to the universal ribosomal protein uS2 family.

The chain is Small ribosomal subunit protein uS2 from Synechococcus sp. (strain RCC307).